The following is a 175-amino-acid chain: ATP synthase subunit b 1 (175 aa).

A helical membrane pass occupies residues 26–48 (IINLAIIIGVLYVYGSKFIGNIL).

Belongs to the ATPase B chain family. F-type ATPases have 2 components, F(1) - the catalytic core - and F(0) - the membrane proton channel. F(1) has five subunits: alpha(3), beta(3), gamma(1), delta(1), epsilon(1). F(0) has four main subunits: a(1), b(1), b'(1) and c(10-14). The alpha and beta chains form an alternating ring which encloses part of the gamma chain. F(1) is attached to F(0) by a central stalk formed by the gamma and epsilon chains, while a peripheral stalk is formed by the delta, b and b' chains.

It localises to the cellular thylakoid membrane. Its function is as follows. F(1)F(0) ATP synthase produces ATP from ADP in the presence of a proton or sodium gradient. F-type ATPases consist of two structural domains, F(1) containing the extramembraneous catalytic core and F(0) containing the membrane proton channel, linked together by a central stalk and a peripheral stalk. During catalysis, ATP synthesis in the catalytic domain of F(1) is coupled via a rotary mechanism of the central stalk subunits to proton translocation. Functionally, component of the F(0) channel, it forms part of the peripheral stalk, linking F(1) to F(0). The chain is ATP synthase subunit b 1 from Picosynechococcus sp. (strain ATCC 27264 / PCC 7002 / PR-6) (Agmenellum quadruplicatum).